A 273-amino-acid chain; its full sequence is Medium-wave-sensitive opsin 1 (273 aa).

Residues 1–5 (APRWV) lie on the Extracellular side of the membrane. A helical transmembrane segment spans residues 6–30 (YHLTSAWMVFVVIASVFTNGLVLAA). The Cytoplasmic portion of the chain corresponds to 31–42 (TMRFKKLRHPLN). Residues 43 to 68 (WILVNLAIADLVETIIASTISVVNQM) form a helical membrane-spanning segment. At 69–82 (YGYFVLGHPLCVVE) the chain is on the extracellular side. A disulfide bond links cysteine 79 and cysteine 156. Residues 83–102 (GYTASLCGITGLWSLAIISW) traverse the membrane as a helical segment. Topologically, residues 103-121 (ERWMVVCRPFGNVRFDAKL) are cytoplasmic. The helical transmembrane segment at 122–145 (AIAGIAFSWIWAAVWTAPPIFGWS) threads the bilayer. Residues 146-171 (RYWPHGLKTSCGPDVFSGSSYPGVQS) are Extracellular-facing. The chain crosses the membrane as a helical span at residues 172-199 (YMIVLMITCCFIPLSVIVLCYLQVWLAI). The Cytoplasmic segment spans residues 200-221 (RAVAKQQKESESTQKAEKEVTR). The helical transmembrane segment at 222 to 245 (MVMVMIFAFCLCWGPYAFFACFAA) threads the bilayer. Topologically, residues 246–253 (AHPGYAFH) are extracellular. The helical transmembrane segment at 254-273 (PLVAALPAYFAKSATIYNPI) threads the bilayer. Lysine 265 bears the N6-(retinylidene)lysine mark.

Belongs to the G-protein coupled receptor 1 family. Opsin subfamily. Monomer. Homodimer. Homotetramer. Post-translationally, O-glycosylated. In terms of processing, phosphorylated on some or all of the serine and threonine residues present in the C-terminal region. In terms of tissue distribution, the three color pigments are found in the cone photoreceptor cells.

The protein localises to the membrane. Its function is as follows. Visual pigments are the light-absorbing molecules that mediate vision. They consist of an apoprotein, opsin, covalently linked to cis-retinal. The sequence is that of Medium-wave-sensitive opsin 1 (OPN1MW) from Odocoileus virginianus virginianus (Virginia white-tailed deer).